Here is a 284-residue protein sequence, read N- to C-terminus: MEMO1 family protein MmarC6_1286 (284 aa).

This sequence belongs to the MEMO1 family.

The sequence is that of MEMO1 family protein MmarC6_1286 from Methanococcus maripaludis (strain C6 / ATCC BAA-1332).